The following is a 65-amino-acid chain: Large ribosomal subunit protein bL35 (65 aa).

The disordered stretch occupies residues 1–22; the sequence is MPKMKTKSSAKKRFKVTGSGKI.

The protein belongs to the bacterial ribosomal protein bL35 family.

The chain is Large ribosomal subunit protein bL35 from Flavobacterium psychrophilum (strain ATCC 49511 / DSM 21280 / CIP 103535 / JIP02/86).